We begin with the raw amino-acid sequence, 247 residues long: Carboxy-S-adenosyl-L-methionine synthase (247 aa).

S-adenosyl-L-methionine-binding positions include Tyr-39, 64-66, 89-90, 117-118, Asn-132, and Arg-199; these read GCS, DN, and DI.

Belongs to the class I-like SAM-binding methyltransferase superfamily. Cx-SAM synthase family. As to quaternary structure, homodimer.

The catalysed reaction is prephenate + S-adenosyl-L-methionine = carboxy-S-adenosyl-L-methionine + 3-phenylpyruvate + H2O. Catalyzes the conversion of S-adenosyl-L-methionine (SAM) to carboxy-S-adenosyl-L-methionine (Cx-SAM). This Salmonella enteritidis PT4 (strain P125109) protein is Carboxy-S-adenosyl-L-methionine synthase.